The following is a 775-amino-acid chain: RNA-directed RNA polymerase (775 aa).

The 114-residue stretch at 473 to 586 (TCAIGFDMKR…FFEADEVDRV (114 aa)) folds into the RdRp catalytic domain.

The catalysed reaction is RNA(n) + a ribonucleoside 5'-triphosphate = RNA(n+1) + diphosphate. Its function is as follows. RNA-dependent RNA polymerase that plays an essential role in the virus replication. This chain is RNA-directed RNA polymerase, found in Brassica napus subsp. rapifera (Purple mistress).